The sequence spans 278 residues: MHSQHRTARIALAVVLTAIPASLATAGVGYASTQASTAVKAGAGLDDPHKKEIAMELVSSAENSSLDWKAQYKYIEDIGDGRGYTGGIIGFCSGTGDMLELVQHYTDLEPGNILAKYLPALKKVNGSASHSGLGTPFTKDWATAAKDTVFQQAQNDERDRVYFDPAVSQAKADGLRALGQFAYYDAIVMHGPGNDPTSFGGIRKTAMKKARTPAQGGDETTYLNAFLDARKAAMLTEAAHDDTSRVDTEQRVFLKAGNLDLNPPLKWKTYGDPYVINS.

Positions 1 to 40 (MHSQHRTARIALAVVLTAIPASLATAGVGYASTQASTAVK) are cleaved as a signal peptide. The active-site Proton donor is E62. The active-site Nucleophile is the D80.

This sequence belongs to the glycosyl hydrolase 46 family.

The protein localises to the secreted. The enzyme catalyses Endohydrolysis of beta-(1-&gt;4)-linkages between D-glucosamine residues in a partly acetylated chitosan.. Its function is as follows. Aids in the defense against invading fungal pathogens by degrading their cell wall chitosan. The sequence is that of Chitosanase (csn) from Streptomyces sp. (strain N174).